The chain runs to 265 residues: Tryptophan synthase alpha chain (265 aa).

Catalysis depends on proton acceptor residues Glu-48 and Asp-59.

It belongs to the TrpA family. As to quaternary structure, tetramer of two alpha and two beta chains.

The catalysed reaction is (1S,2R)-1-C-(indol-3-yl)glycerol 3-phosphate + L-serine = D-glyceraldehyde 3-phosphate + L-tryptophan + H2O. It functions in the pathway amino-acid biosynthesis; L-tryptophan biosynthesis; L-tryptophan from chorismate: step 5/5. Functionally, the alpha subunit is responsible for the aldol cleavage of indoleglycerol phosphate to indole and glyceraldehyde 3-phosphate. The polypeptide is Tryptophan synthase alpha chain (Ruthia magnifica subsp. Calyptogena magnifica).